The primary structure comprises 488 residues: GTPase Der (488 aa).

2 consecutive EngA-type G domains span residues 3-166 (PVVA…AEAM) and 199-372 (IKLA…DSAT). GTP is bound by residues 9–16 (GRPNVGKS), 56–60 (DTGGI), 118–121 (NKVD), 205–212 (GKPNVGKS), 252–256 (DTAGV), and 317–320 (NKWD). In terms of domain architecture, KH-like spans 373 to 457 (RRVSTSMLTR…PIQLRFQEGD (85 aa)). Residues 460–488 (FENKTEKLTMSQERRRKRAQSHIKDRKTK) are disordered. The span at 473 to 488 (RRRKRAQSHIKDRKTK) shows a compositional bias: basic residues.

It belongs to the TRAFAC class TrmE-Era-EngA-EngB-Septin-like GTPase superfamily. EngA (Der) GTPase family. As to quaternary structure, associates with the 50S ribosomal subunit.

Functionally, GTPase that plays an essential role in the late steps of ribosome biogenesis. This chain is GTPase Der, found in Shewanella baltica (strain OS155 / ATCC BAA-1091).